Consider the following 152-residue polypeptide: uncharacterized protein (152 aa).

The tract at residues 127-152 (EKEKAERKAEKAKKNKKKSSTKTKKK) is disordered. Positions 136–152 (EKAKKNKKKSSTKTKKK) are enriched in basic residues.

It belongs to the mimivirus R546 family.

This is an uncharacterized protein from Sputnik virophage.